The sequence spans 163 residues: uncharacterized protein (163 aa).

This is an uncharacterized protein from Drosophila melanogaster (Fruit fly).